The chain runs to 155 residues: Superoxide dismutase [Cu-Zn] (155 aa).

Positions 47, 49, and 64 each coordinate Cu cation. Cysteines 58 and 147 form a disulfide. Positions 64, 72, 81, and 84 each coordinate Zn(2+). His121 contacts Cu cation. Arg144 contacts substrate.

This sequence belongs to the Cu-Zn superoxide dismutase family. Homodimer. The cofactor is Cu cation. Zn(2+) serves as cofactor.

Its subcellular location is the cytoplasm. It carries out the reaction 2 superoxide + 2 H(+) = H2O2 + O2. Destroys radicals which are normally produced within the cells and which are toxic to biological systems. The sequence is that of Superoxide dismutase [Cu-Zn] (SOD1) from Kluyveromyces lactis (strain ATCC 8585 / CBS 2359 / DSM 70799 / NBRC 1267 / NRRL Y-1140 / WM37) (Yeast).